Consider the following 333-residue polypeptide: Glycerol-3-phosphate dehydrogenase [NAD(P)+] (333 aa).

NADPH-binding residues include Trp-12, His-31, and Lys-105. Lys-105, Gly-134, and Ser-136 together coordinate sn-glycerol 3-phosphate. Position 138 (Ala-138) interacts with NADPH. Positions 189, 242, 252, 253, and 254 each coordinate sn-glycerol 3-phosphate. The active-site Proton acceptor is Lys-189. Residue Arg-253 participates in NADPH binding. Residues Val-278 and Glu-280 each contribute to the NADPH site.

This sequence belongs to the NAD-dependent glycerol-3-phosphate dehydrogenase family.

The protein resides in the cytoplasm. It carries out the reaction sn-glycerol 3-phosphate + NAD(+) = dihydroxyacetone phosphate + NADH + H(+). It catalyses the reaction sn-glycerol 3-phosphate + NADP(+) = dihydroxyacetone phosphate + NADPH + H(+). Its pathway is membrane lipid metabolism; glycerophospholipid metabolism. In terms of biological role, catalyzes the reduction of the glycolytic intermediate dihydroxyacetone phosphate (DHAP) to sn-glycerol 3-phosphate (G3P), the key precursor for phospholipid synthesis. The sequence is that of Glycerol-3-phosphate dehydrogenase [NAD(P)+] from Brachyspira hyodysenteriae (strain ATCC 49526 / WA1).